The primary structure comprises 261 residues: 4-hydroxy-tetrahydrodipicolinate reductase (261 aa).

NAD(+)-binding positions include 11 to 16 (GFTGAM), 96 to 98 (GTT), and 122 to 125 (APNF). His-152 acts as the Proton donor/acceptor in catalysis. A (S)-2,3,4,5-tetrahydrodipicolinate-binding site is contributed by His-153. The active-site Proton donor is the Lys-156. Residue 162–163 (GT) participates in (S)-2,3,4,5-tetrahydrodipicolinate binding.

This sequence belongs to the DapB family.

The protein localises to the cytoplasm. The enzyme catalyses (S)-2,3,4,5-tetrahydrodipicolinate + NAD(+) + H2O = (2S,4S)-4-hydroxy-2,3,4,5-tetrahydrodipicolinate + NADH + H(+). The catalysed reaction is (S)-2,3,4,5-tetrahydrodipicolinate + NADP(+) + H2O = (2S,4S)-4-hydroxy-2,3,4,5-tetrahydrodipicolinate + NADPH + H(+). It functions in the pathway amino-acid biosynthesis; L-lysine biosynthesis via DAP pathway; (S)-tetrahydrodipicolinate from L-aspartate: step 4/4. Functionally, catalyzes the conversion of 4-hydroxy-tetrahydrodipicolinate (HTPA) to tetrahydrodipicolinate. The sequence is that of 4-hydroxy-tetrahydrodipicolinate reductase from Lactobacillus acidophilus (strain ATCC 700396 / NCK56 / N2 / NCFM).